The chain runs to 92 residues: UPF0728 protein C10orf53 homolog (92 aa).

This sequence belongs to the UPF0728 family.

In Danio rerio (Zebrafish), this protein is UPF0728 protein C10orf53 homolog.